The primary structure comprises 607 residues: 1-deoxy-D-xylulose-5-phosphate synthase (607 aa).

Thiamine diphosphate is bound by residues His-63 and 104-106 (GHS). Position 135 (Asp-135) interacts with Mg(2+). Thiamine diphosphate-binding positions include 136 to 137 (GA), Asn-164, Tyr-271, and Glu-351. A Mg(2+)-binding site is contributed by Asn-164.

This sequence belongs to the transketolase family. DXPS subfamily. In terms of assembly, homodimer. Mg(2+) is required as a cofactor. Requires thiamine diphosphate as cofactor.

It carries out the reaction D-glyceraldehyde 3-phosphate + pyruvate + H(+) = 1-deoxy-D-xylulose 5-phosphate + CO2. It functions in the pathway metabolic intermediate biosynthesis; 1-deoxy-D-xylulose 5-phosphate biosynthesis; 1-deoxy-D-xylulose 5-phosphate from D-glyceraldehyde 3-phosphate and pyruvate: step 1/1. In terms of biological role, catalyzes the acyloin condensation reaction between C atoms 2 and 3 of pyruvate and glyceraldehyde 3-phosphate to yield 1-deoxy-D-xylulose-5-phosphate (DXP). The chain is 1-deoxy-D-xylulose-5-phosphate synthase from Campylobacter hominis (strain ATCC BAA-381 / DSM 21671 / CCUG 45161 / LMG 19568 / NCTC 13146 / CH001A).